The chain runs to 176 residues: Ribosome maturation factor RimM (176 aa).

The PRC barrel domain occupies 99 to 174 (KNEFYITDLI…IVLIQPEIWN (76 aa)).

This sequence belongs to the RimM family. As to quaternary structure, binds ribosomal protein uS19.

The protein resides in the cytoplasm. Functionally, an accessory protein needed during the final step in the assembly of 30S ribosomal subunit, possibly for assembly of the head region. Essential for efficient processing of 16S rRNA. May be needed both before and after RbfA during the maturation of 16S rRNA. It has affinity for free ribosomal 30S subunits but not for 70S ribosomes. The chain is Ribosome maturation factor RimM from Leptospira interrogans serogroup Icterohaemorrhagiae serovar copenhageni (strain Fiocruz L1-130).